Reading from the N-terminus, the 198-residue chain is Nucleoid occlusion factor SlmA (198 aa).

The HTH tetR-type domain occupies 9–70 (RNRREEILQA…SLIEFIEDSL (62 aa)). The segment at residues 33–52 (TTAKLAANVGVSEAALYRHF) is a DNA-binding region (H-T-H motif). Residues 113 to 144 (ALMFEQDRLQDRINQLFERIESQLRQVLREHK) are a coiled coil.

It belongs to the nucleoid occlusion factor SlmA family. In terms of assembly, homodimer. Interacts with FtsZ.

The protein resides in the cytoplasm. It is found in the nucleoid. Functionally, required for nucleoid occlusion (NO) phenomenon, which prevents Z-ring formation and cell division over the nucleoid. Acts as a DNA-associated cell division inhibitor that binds simultaneously chromosomal DNA and FtsZ, and disrupts the assembly of FtsZ polymers. SlmA-DNA-binding sequences (SBS) are dispersed on non-Ter regions of the chromosome, preventing FtsZ polymerization at these regions. The protein is Nucleoid occlusion factor SlmA of Pectobacterium carotovorum subsp. carotovorum (strain PC1).